The sequence spans 466 residues: Cytochrome c-552 (466 aa).

Positions 1–27 (MVRNLTKKSFALSALVAASLMASGVMA) are cleaved as a signal peptide. H87 is a heme c binding site. Positions 115, 118, and 119 each coordinate heme. Residues C153, C156, H157, C195, C198, and H199 each contribute to the heme c site. Ca(2+)-binding residues include E201, Y202, K250, and Q252. Y202 is a substrate binding site. Residue H253 participates in substrate binding. Heme c is bound by residues H264, C271, C274, H275, H290, C303, C306, H307, and H382.

Belongs to the cytochrome c-552 family. Requires Ca(2+) as cofactor. The cofactor is heme c.

The protein resides in the periplasm. The catalysed reaction is 6 Fe(III)-[cytochrome c] + NH4(+) + 2 H2O = 6 Fe(II)-[cytochrome c] + nitrite + 8 H(+). The protein operates within nitrogen metabolism; nitrate reduction (assimilation). Functionally, catalyzes the reduction of nitrite to ammonia, consuming six electrons in the process. This Shewanella sediminis (strain HAW-EB3) protein is Cytochrome c-552.